We begin with the raw amino-acid sequence, 447 residues long: Methylenetetrahydrofolate--tRNA-(uracil-5-)-methyltransferase TrmFO (447 aa).

9–14 (GGGLAG) serves as a coordination point for FAD.

This sequence belongs to the MnmG family. TrmFO subfamily. The cofactor is FAD.

Its subcellular location is the cytoplasm. The enzyme catalyses uridine(54) in tRNA + (6R)-5,10-methylene-5,6,7,8-tetrahydrofolate + NADH + H(+) = 5-methyluridine(54) in tRNA + (6S)-5,6,7,8-tetrahydrofolate + NAD(+). The catalysed reaction is uridine(54) in tRNA + (6R)-5,10-methylene-5,6,7,8-tetrahydrofolate + NADPH + H(+) = 5-methyluridine(54) in tRNA + (6S)-5,6,7,8-tetrahydrofolate + NADP(+). Its function is as follows. Catalyzes the folate-dependent formation of 5-methyl-uridine at position 54 (M-5-U54) in all tRNAs. This Paramagnetospirillum magneticum (strain ATCC 700264 / AMB-1) (Magnetospirillum magneticum) protein is Methylenetetrahydrofolate--tRNA-(uracil-5-)-methyltransferase TrmFO.